We begin with the raw amino-acid sequence, 273 residues long: Ribosomal RNA small subunit methyltransferase A (273 aa).

The S-adenosyl-L-methionine site is built by Asn-18, Leu-20, Gly-45, Glu-66, Asp-91, and Asn-113.

This sequence belongs to the class I-like SAM-binding methyltransferase superfamily. rRNA adenine N(6)-methyltransferase family. RsmA subfamily.

It localises to the cytoplasm. The catalysed reaction is adenosine(1518)/adenosine(1519) in 16S rRNA + 4 S-adenosyl-L-methionine = N(6)-dimethyladenosine(1518)/N(6)-dimethyladenosine(1519) in 16S rRNA + 4 S-adenosyl-L-homocysteine + 4 H(+). In terms of biological role, specifically dimethylates two adjacent adenosines (A1518 and A1519) in the loop of a conserved hairpin near the 3'-end of 16S rRNA in the 30S particle. May play a critical role in biogenesis of 30S subunits. This chain is Ribosomal RNA small subunit methyltransferase A, found in Enterobacter sp. (strain 638).